The sequence spans 189 residues: Elongation factor P (189 aa).

The protein belongs to the elongation factor P family.

It is found in the cytoplasm. It participates in protein biosynthesis; polypeptide chain elongation. Involved in peptide bond synthesis. Stimulates efficient translation and peptide-bond synthesis on native or reconstituted 70S ribosomes in vitro. Probably functions indirectly by altering the affinity of the ribosome for aminoacyl-tRNA, thus increasing their reactivity as acceptors for peptidyl transferase. The sequence is that of Elongation factor P from Sinorhizobium fredii (strain NBRC 101917 / NGR234).